The sequence spans 261 residues: Cytochrome c oxidase subunit 3 (261 aa).

The Mitochondrial matrix portion of the chain corresponds to 1–15; sequence MTHQTHAYHMVNPSP. Residues 16-34 traverse the membrane as a helical segment; it reads WPLTGALSALLMTSGLTMW. Residues 35–40 are Mitochondrial intermembrane-facing; the sequence is FHFNSM. Residues 41–66 form a helical membrane-spanning segment; it reads TLLMIGLTTNMLTMYQWWRDVIREST. At 67-72 the chain is on the mitochondrial matrix side; sequence FQGHHT. A helical membrane pass occupies residues 73–105; the sequence is PAVQKGLRYGMILFIISEVLFFTGFFWAFYHSS. Over 106 to 128 the chain is Mitochondrial intermembrane; that stretch reads LAPTPELGGCWPPTGIHPLNPLE. A helical membrane pass occupies residues 129–152; sequence VPLLNTSVLLASGVSITWAHHSLM. Over 153 to 155 the chain is Mitochondrial matrix; that stretch reads EGD. Residues 156 to 183 traverse the membrane as a helical segment; the sequence is RKHMLQALFITITLGVYFTLLQASEYYE. Over 184-190 the chain is Mitochondrial intermembrane; that stretch reads APFTISD. Residues 191 to 223 form a helical membrane-spanning segment; the sequence is GVYGSTFFVATGFHGLHVIIGSTFLIVCFFRQL. The Mitochondrial matrix segment spans residues 224–232; it reads KFHFTSNHH. Residues 233–256 traverse the membrane as a helical segment; the sequence is FGFEAAAWYWHFVDVVWLFLYVSI. At 257 to 261 the chain is on the mitochondrial intermembrane side; that stretch reads YWWGS.

This sequence belongs to the cytochrome c oxidase subunit 3 family. As to quaternary structure, component of the cytochrome c oxidase (complex IV, CIV), a multisubunit enzyme composed of 14 subunits. The complex is composed of a catalytic core of 3 subunits MT-CO1, MT-CO2 and MT-CO3, encoded in the mitochondrial DNA, and 11 supernumerary subunits COX4I1 (or COX4I2), COX5A, COX5B, COX6A2 (or COX6A1), COX6B1 (or COX6B2), COX6C, COX7A1 (or COX7A2), COX7B, COX7C, COX8B and NDUFA4, which are encoded in the nuclear genome. The complex exists as a monomer or a dimer and forms supercomplexes (SCs) in the inner mitochondrial membrane with NADH-ubiquinone oxidoreductase (complex I, CI) and ubiquinol-cytochrome c oxidoreductase (cytochrome b-c1 complex, complex III, CIII), resulting in different assemblies (supercomplex SCI(1)III(2)IV(1) and megacomplex MCI(2)III(2)IV(2)).

It localises to the mitochondrion inner membrane. It carries out the reaction 4 Fe(II)-[cytochrome c] + O2 + 8 H(+)(in) = 4 Fe(III)-[cytochrome c] + 2 H2O + 4 H(+)(out). Component of the cytochrome c oxidase, the last enzyme in the mitochondrial electron transport chain which drives oxidative phosphorylation. The respiratory chain contains 3 multisubunit complexes succinate dehydrogenase (complex II, CII), ubiquinol-cytochrome c oxidoreductase (cytochrome b-c1 complex, complex III, CIII) and cytochrome c oxidase (complex IV, CIV), that cooperate to transfer electrons derived from NADH and succinate to molecular oxygen, creating an electrochemical gradient over the inner membrane that drives transmembrane transport and the ATP synthase. Cytochrome c oxidase is the component of the respiratory chain that catalyzes the reduction of oxygen to water. Electrons originating from reduced cytochrome c in the intermembrane space (IMS) are transferred via the dinuclear copper A center (CU(A)) of subunit 2 and heme A of subunit 1 to the active site in subunit 1, a binuclear center (BNC) formed by heme A3 and copper B (CU(B)). The BNC reduces molecular oxygen to 2 water molecules using 4 electrons from cytochrome c in the IMS and 4 protons from the mitochondrial matrix. This Bos taurus (Bovine) protein is Cytochrome c oxidase subunit 3 (MT-CO3).